Here is a 220-residue protein sequence, read N- to C-terminus: Deoxyribose-phosphate aldolase (220 aa).

The Proton donor/acceptor role is filled by Asp-89. Lys-151 acts as the Schiff-base intermediate with acetaldehyde in catalysis. Lys-180 acts as the Proton donor/acceptor in catalysis.

This sequence belongs to the DeoC/FbaB aldolase family. DeoC type 1 subfamily.

The protein resides in the cytoplasm. It catalyses the reaction 2-deoxy-D-ribose 5-phosphate = D-glyceraldehyde 3-phosphate + acetaldehyde. Its pathway is carbohydrate degradation; 2-deoxy-D-ribose 1-phosphate degradation; D-glyceraldehyde 3-phosphate and acetaldehyde from 2-deoxy-alpha-D-ribose 1-phosphate: step 2/2. Catalyzes a reversible aldol reaction between acetaldehyde and D-glyceraldehyde 3-phosphate to generate 2-deoxy-D-ribose 5-phosphate. The protein is Deoxyribose-phosphate aldolase of Streptococcus pneumoniae (strain Taiwan19F-14).